Reading from the N-terminus, the 540-residue chain is MDSQRNILLIALALVSFLLFQQWQVAKNPAPQAVEQAQSSSSLPAPSFADELDPVPGQQQASAKTITVTTDVLTLSIDTVGGDVVHADLNQYSAELDSSDPFVLLKDTQGHQFIAQSGLVGPQGIDLSSSNRPHYNVSADSFTLADGQDELRVPMTFTANGIEYTKTYVLKRGSYALNVEYDVANNSGNNATFGMYAHLRQNLMDAGGSITMPTYRGGAYSTEDTRYKKYSFEDMQDRNLSINLADGQGWAAMIQHYFAAAWIPRNEPGTNLYTRVIGNLGDIGVRMPNKTIATGDQAKFEATLWVGPKLQQEMAAVAPNLDLVVDYGWLWFIAKPLHSLLAFIQSFVGNWGVAIICLTFIVRGAMYPLTKAQYTSMAKMRMLQPKLQAMRERIGDDRQRMSQEMMELYKKEKVNPLGGCLPLVLQMPIFIALYWALMESVELRHSPFFGWIHDLSAQDPYYILPLLMGASMFLIQKMSPTTVTDPMQQKIMTFMPVMFTFFFLFFPSGLVLYWLVSNIVTLIQQTLIYKALEKKGLHTK.

The chain crosses the membrane as a helical span at residues 6-26 (NILLIALALVSFLLFQQWQVA). Low complexity predominate over residues 36 to 47 (QAQSSSSLPAPS). The interval 36–63 (QAQSSSSLPAPSFADELDPVPGQQQASA) is disordered. 4 helical membrane-spanning segments follow: residues 342-362 (AFIQSFVGNWGVAIICLTFIV), 417-437 (LGGCLPLVLQMPIFIALYWAL), 455-475 (LSAQDPYYILPLLMGASMFLI), and 496-516 (PVMFTFFFLFFPSGLVLYWLV).

This sequence belongs to the OXA1/ALB3/YidC family. Type 1 subfamily. As to quaternary structure, interacts with the Sec translocase complex via SecD. Specifically interacts with transmembrane segments of nascent integral membrane proteins during membrane integration.

Its subcellular location is the cell inner membrane. Its function is as follows. Required for the insertion and/or proper folding and/or complex formation of integral membrane proteins into the membrane. Involved in integration of membrane proteins that insert both dependently and independently of the Sec translocase complex, as well as at least some lipoproteins. Aids folding of multispanning membrane proteins. This is Membrane protein insertase YidC from Vibrio parahaemolyticus serotype O3:K6 (strain RIMD 2210633).